The sequence spans 170 residues: UPF0260 protein RPB_3505 (170 aa).

It belongs to the UPF0260 family.

The protein is UPF0260 protein RPB_3505 of Rhodopseudomonas palustris (strain HaA2).